The primary structure comprises 405 residues: Acetate kinase (405 aa).

Asn-7 contributes to the Mg(2+) binding site. Lys-14 contacts ATP. Substrate is bound at residue Arg-98. Residue Asp-155 is the Proton donor/acceptor of the active site. Residues 214–218 (HLGNG), 289–291 (DLR), and 337–341 (GVGEN) each bind ATP. Glu-390 provides a ligand contact to Mg(2+).

This sequence belongs to the acetokinase family. In terms of assembly, homodimer. Mg(2+) is required as a cofactor. The cofactor is Mn(2+).

It is found in the cytoplasm. It carries out the reaction acetate + ATP = acetyl phosphate + ADP. The protein operates within metabolic intermediate biosynthesis; acetyl-CoA biosynthesis; acetyl-CoA from acetate: step 1/2. Catalyzes the formation of acetyl phosphate from acetate and ATP. Can also catalyze the reverse reaction. In Gloeothece citriformis (strain PCC 7424) (Cyanothece sp. (strain PCC 7424)), this protein is Acetate kinase.